We begin with the raw amino-acid sequence, 270 residues long: 4-hydroxy-tetrahydrodipicolinate reductase (270 aa).

NAD(+) is bound by residues 11–16 and E37; that span reads GCQGRM. NADP(+) is bound at residue R38. NAD(+) contacts are provided by residues 101–103 and 125–128; these read GTT and ASNF. H158 serves as the catalytic Proton donor/acceptor. (S)-2,3,4,5-tetrahydrodipicolinate is bound at residue H159. K162 serves as the catalytic Proton donor. Position 168–169 (168–169) interacts with (S)-2,3,4,5-tetrahydrodipicolinate; that stretch reads GT.

It belongs to the DapB family.

The protein localises to the cytoplasm. It carries out the reaction (S)-2,3,4,5-tetrahydrodipicolinate + NAD(+) + H2O = (2S,4S)-4-hydroxy-2,3,4,5-tetrahydrodipicolinate + NADH + H(+). The catalysed reaction is (S)-2,3,4,5-tetrahydrodipicolinate + NADP(+) + H2O = (2S,4S)-4-hydroxy-2,3,4,5-tetrahydrodipicolinate + NADPH + H(+). Its pathway is amino-acid biosynthesis; L-lysine biosynthesis via DAP pathway; (S)-tetrahydrodipicolinate from L-aspartate: step 4/4. Its function is as follows. Catalyzes the conversion of 4-hydroxy-tetrahydrodipicolinate (HTPA) to tetrahydrodipicolinate. The protein is 4-hydroxy-tetrahydrodipicolinate reductase of Tolumonas auensis (strain DSM 9187 / NBRC 110442 / TA 4).